The following is a 319-amino-acid chain: Glycine--tRNA ligase alpha subunit (319 aa).

The protein belongs to the class-II aminoacyl-tRNA synthetase family. As to quaternary structure, tetramer of two alpha and two beta subunits.

It localises to the cytoplasm. The enzyme catalyses tRNA(Gly) + glycine + ATP = glycyl-tRNA(Gly) + AMP + diphosphate. The chain is Glycine--tRNA ligase alpha subunit from Oenococcus oeni (strain ATCC BAA-331 / PSU-1).